Reading from the N-terminus, the 345-residue chain is Phosphoribosylformylglycinamidine cyclo-ligase (345 aa).

The protein belongs to the AIR synthase family.

It localises to the cytoplasm. It catalyses the reaction 2-formamido-N(1)-(5-O-phospho-beta-D-ribosyl)acetamidine + ATP = 5-amino-1-(5-phospho-beta-D-ribosyl)imidazole + ADP + phosphate + H(+). Its pathway is purine metabolism; IMP biosynthesis via de novo pathway; 5-amino-1-(5-phospho-D-ribosyl)imidazole from N(2)-formyl-N(1)-(5-phospho-D-ribosyl)glycinamide: step 2/2. In Shigella dysenteriae serotype 1 (strain Sd197), this protein is Phosphoribosylformylglycinamidine cyclo-ligase.